We begin with the raw amino-acid sequence, 598 residues long: Elongation factor 4 (598 aa).

The tr-type G domain occupies 2–184; that stretch reads DHIRNFSIIA…AIVKRVPPPR (183 aa). GTP contacts are provided by residues 14–19 and 131–134; these read DHGKST and NKID.

Belongs to the TRAFAC class translation factor GTPase superfamily. Classic translation factor GTPase family. LepA subfamily.

Its subcellular location is the cell inner membrane. It carries out the reaction GTP + H2O = GDP + phosphate + H(+). Required for accurate and efficient protein synthesis under certain stress conditions. May act as a fidelity factor of the translation reaction, by catalyzing a one-codon backward translocation of tRNAs on improperly translocated ribosomes. Back-translocation proceeds from a post-translocation (POST) complex to a pre-translocation (PRE) complex, thus giving elongation factor G a second chance to translocate the tRNAs correctly. Binds to ribosomes in a GTP-dependent manner. This chain is Elongation factor 4, found in Syntrophus aciditrophicus (strain SB).